The following is a 189-amino-acid chain: Interferon alpha-G (189 aa).

The first 23 residues, 1–23, serve as a signal peptide directing secretion; it reads MAPAWSLLLALLLLSCNAICSLG. 2 disulfides stabilise this stretch: Cys-24–Cys-122 and Cys-52–Cys-162.

Belongs to the alpha/beta interferon family.

Its subcellular location is the secreted. Functionally, produced by macrophages, IFN-alpha have antiviral activities. Interferon stimulates the production of two enzymes: a protein kinase and an oligoadenylate synthetase. The sequence is that of Interferon alpha-G (IFNAG) from Bos taurus (Bovine).